A 215-amino-acid chain; its full sequence is Elongation factor Ts (215 aa).

Residues 80–83 (TDFA) are involved in Mg(2+) ion dislocation from EF-Tu.

This sequence belongs to the EF-Ts family.

Its subcellular location is the cytoplasm. In terms of biological role, associates with the EF-Tu.GDP complex and induces the exchange of GDP to GTP. It remains bound to the aminoacyl-tRNA.EF-Tu.GTP complex up to the GTP hydrolysis stage on the ribosome. The chain is Elongation factor Ts from Acetivibrio thermocellus (strain ATCC 27405 / DSM 1237 / JCM 9322 / NBRC 103400 / NCIMB 10682 / NRRL B-4536 / VPI 7372) (Clostridium thermocellum).